We begin with the raw amino-acid sequence, 186 residues long: Ribosome-recycling factor (186 aa).

Belongs to the RRF family.

Its subcellular location is the cytoplasm. Functionally, responsible for the release of ribosomes from messenger RNA at the termination of protein biosynthesis. May increase the efficiency of translation by recycling ribosomes from one round of translation to another. In Maricaulis maris (strain MCS10) (Caulobacter maris), this protein is Ribosome-recycling factor.